The sequence spans 433 residues: Probable RNA 3'-terminal phosphate cyclase (433 aa).

The segment covering 1 to 10 (MGKNKNYNKN) has biased composition (low complexity). A disordered region spans residues 1–28 (MGKNKNYNKNQFKKSKTNNDTTVAQQQQ). The span at 18–28 (NNDTTVAQQQQ) shows a compositional bias: polar residues. ATP contacts are provided by residues Gln137 and 328–332 (YLQDQ). Catalysis depends on His354, which acts as the Tele-AMP-histidine intermediate. Residues 400 to 433 (LNNNNNNSNSNTTTTTTTTTISTTTIDNQNSEEK) form a disordered region. Residues 401–425 (NNNNNNSNSNTTTTTTTTTISTTTI) show a composition bias toward low complexity.

It belongs to the RNA 3'-terminal cyclase family. Type 1 subfamily.

The protein resides in the nucleus. It is found in the nucleoplasm. The enzyme catalyses a 3'-end 3'-phospho-ribonucleotide-RNA + ATP = a 3'-end 2',3'-cyclophospho-ribonucleotide-RNA + AMP + diphosphate. Functionally, catalyzes the conversion of 3'-phosphate to a 2',3'-cyclic phosphodiester at the end of RNA. The mechanism of action of the enzyme occurs in 3 steps: (A) adenylation of the enzyme by ATP; (B) transfer of adenylate to an RNA-N3'P to produce RNA-N3'PP5'A; (C) and attack of the adjacent 2'-hydroxyl on the 3'-phosphorus in the diester linkage to produce the cyclic end product. The biological role of this enzyme is unknown but it is likely to function in some aspects of cellular RNA processing. The protein is Probable RNA 3'-terminal phosphate cyclase (rtca) of Dictyostelium discoideum (Social amoeba).